The chain runs to 108 residues: Class I hydrophobin 3 (108 aa).

The N-terminal stretch at 1–17 is a signal peptide; sequence MFFQTTIVAALAFLAVA. 4 disulfides stabilise this stretch: Cys-28-Cys-87, Cys-35-Cys-81, Cys-36-Cys-69, and Cys-88-Cys-101. An N-linked (GlcNAc...) asparagine glycan is attached at Asn-37.

It belongs to the fungal hydrophobin family. Self-assembles to form functional amyloid fibrils called rodlets. Self-assembly into fibrillar rodlets occurs spontaneously at hydrophobic:hydrophilic interfaces and the rodlets further associate laterally to form amphipathic monolayers.

The protein resides in the secreted. It is found in the cell wall. Aerial growth, conidiation, and dispersal of filamentous fungi in the environment rely upon a capability of their secreting small amphipathic proteins called hydrophobins (HPBs) with low sequence identity. Class I can self-assemble into an outermost layer of rodlet bundles on aerial cell surfaces, conferring cellular hydrophobicity that supports fungal growth, development and dispersal; whereas Class II form highly ordered films at water-air interfaces through intermolecular interactions but contribute nothing to the rodlet structure. Vmh3 is a class I hydrophobin that is essential for the maintenance of the surface hydrophobicity of the mycelium and might be involved in the development of fruiting bodies. Plays an important role in hyphal resistance against environmental stress. Necessary for the efficient biodegradation of lignin. The sequence is that of Class I hydrophobin 3 from Pleurotus ostreatus (Oyster mushroom).